A 237-amino-acid chain; its full sequence is Large ribosomal subunit protein uL1 (237 aa).

This sequence belongs to the universal ribosomal protein uL1 family. Part of the 50S ribosomal subunit.

Binds directly to 23S rRNA. The L1 stalk is quite mobile in the ribosome, and is involved in E site tRNA release. Its function is as follows. Protein L1 is also a translational repressor protein, it controls the translation of the L11 operon by binding to its mRNA. The chain is Large ribosomal subunit protein uL1 from Dehalococcoides mccartyi (strain ATCC BAA-2266 / KCTC 15142 / 195) (Dehalococcoides ethenogenes (strain 195)).